A 702-amino-acid polypeptide reads, in one-letter code: MIHTLETTVAGRKMKVDFGKTGMLSNAAIFMSYGDTVVMINANASKEPREGIDFFPLSVEYEERLYSVGKIPGGFIKREGKPSDKSILHARSIDRPLRPLFPKGYRNDVQIVNTVLSVEQDNLPEILAINGSSLALCLSSIPFTTPVAAVSVGLVDGEFIINPTVAQRENTILDLTVCATKERVMMVEAGGQEIDEETMYSAIMFGFEECKNIVAFQEEAVAKFGKTKNEPVLYKADEEVEKEVKSFAFDMIKEAMYIMDKDERNAQLDKVKEKISEEFSEKYEDKGADISEVIYKTQKEIVRNMLLNEDRRPDGRAFNEVRPISCEVGILPRTHGTGLFTRGLTQVMTVATLGALGDVQILDGIAEEESKRYMHHYNFPSYSVGEVRPLRGPGRREIGHGALAERALEPLIPSEEEFPYTIRLVSEVLSSNGSTSQASVCGSTLALLDAGVPIKRPAAGIAMGLITSEDLEKEKVITDIQGIEDFFGDMDFKVAGTEKGITSIQFDTKIAGLSNSCVKDALEGAKKARLHILGKIKECIPEPRKELSKYAPRTEIICIDPEKIRDVIGAGGKVINKIIADTNVKIEIKEDGKIFVTSNNEPEGVKKAISIIEGLTKEVVQGEIYLGKVTKTTNFGAFVEILPGKEGLVHISKLDFARVEKVEDVVSVGDEILVKVTDIDNQGRINLSRKDAIAKKEEEKDK.

Asp-485 and Asp-491 together coordinate Mg(2+). One can recognise a KH domain in the interval 552-612 (PRTEIICIDP…EGVKKAISII (61 aa)). Residues 622–690 (GEIYLGKVTK…NQGRINLSRK (69 aa)) enclose the S1 motif domain.

It belongs to the polyribonucleotide nucleotidyltransferase family. Mg(2+) is required as a cofactor.

Its subcellular location is the cytoplasm. It carries out the reaction RNA(n+1) + phosphate = RNA(n) + a ribonucleoside 5'-diphosphate. Involved in mRNA degradation. Catalyzes the phosphorolysis of single-stranded polyribonucleotides processively in the 3'- to 5'-direction. This is Polyribonucleotide nucleotidyltransferase from Clostridium botulinum (strain 657 / Type Ba4).